Reading from the N-terminus, the 630-residue chain is Probable potassium transport system protein Kup (630 aa).

The next 12 helical transmembrane spans lie at 17-37, 51-71, 105-125, 144-164, 175-195, 218-238, 255-275, 283-303, 344-364, 374-394, 402-422, and 428-448; these read LAIA…LYSL, PSAI…VVGI, ITGL…GDAV, PQLS…LFWI, LFGP…VYHI, VLLA…AEAL, YVLV…LLLL, PFFL…STVA, IYVP…VIGF, YGIA…VVMV, LLVA…FGAN, and QGGW…MTWY.

The protein belongs to the HAK/KUP transporter (TC 2.A.72) family.

Its subcellular location is the cell inner membrane. It carries out the reaction K(+)(in) + H(+)(in) = K(+)(out) + H(+)(out). Transport of potassium into the cell. Likely operates as a K(+):H(+) symporter. This chain is Probable potassium transport system protein Kup, found in Burkholderia thailandensis (strain ATCC 700388 / DSM 13276 / CCUG 48851 / CIP 106301 / E264).